We begin with the raw amino-acid sequence, 42 residues long: Crotamine-IV-3 (42 aa).

Intrachain disulfides connect Cys4-Cys37, Cys11-Cys31, and Cys19-Cys38.

Belongs to the crotamine-myotoxin family. As to quaternary structure, monomer. In terms of tissue distribution, expressed by the venom gland.

It is found in the secreted. Its function is as follows. Cationic peptide that possesses multiple functions. It acts as a cell-penetrating peptide (CPP), and as a potent voltage-gated potassium channel (Kv) inhibitor. It exhibits antimicrobial activities, and hind limb paralysis. It also induces potent blockade of neuromuscular transmission in young chicken biventer cervicis preparation and potent myotoxic effect. In mice, it induces myonecrosis, upon intramuscular or subcutaneous injections. This is Crotamine-IV-3 from Crotalus durissus cumanensis (South American rattlesnake).